Reading from the N-terminus, the 557-residue chain is Formate--tetrahydrofolate ligase (557 aa).

66 to 73 (TPAGEGKS) serves as a coordination point for ATP.

It belongs to the formate--tetrahydrofolate ligase family.

The catalysed reaction is (6S)-5,6,7,8-tetrahydrofolate + formate + ATP = (6R)-10-formyltetrahydrofolate + ADP + phosphate. It participates in one-carbon metabolism; tetrahydrofolate interconversion. The polypeptide is Formate--tetrahydrofolate ligase (Clostridium botulinum (strain ATCC 19397 / Type A)).